Reading from the N-terminus, the 130-residue chain is Large ribosomal subunit protein bL17 (130 aa).

This sequence belongs to the bacterial ribosomal protein bL17 family. As to quaternary structure, part of the 50S ribosomal subunit. Contacts protein L32.

The polypeptide is Large ribosomal subunit protein bL17 (Shewanella halifaxensis (strain HAW-EB4)).